We begin with the raw amino-acid sequence, 284 residues long: Probable protein phosphatase 2C 41 (284 aa).

The region spanning 35-282 (SYGFYLVRGM…DDISCVVVRF (248 aa)) is the PPM-type phosphatase domain. Mn(2+) is bound by residues aspartate 72, glycine 73, aspartate 234, and aspartate 273.

Belongs to the PP2C family. Requires Mg(2+) as cofactor. Mn(2+) is required as a cofactor.

The catalysed reaction is O-phospho-L-seryl-[protein] + H2O = L-seryl-[protein] + phosphate. It carries out the reaction O-phospho-L-threonyl-[protein] + H2O = L-threonyl-[protein] + phosphate. This is Probable protein phosphatase 2C 41 from Oryza sativa subsp. japonica (Rice).